The following is a 167-amino-acid chain: uncharacterized protein (167 aa).

The stretch at 70–118 (KIVELRKAMESIITELAYIKGELKGLQEKGESKVERKEIIEEKIQKAMV) forms a coiled coil. Basic and acidic residues predominate over residues 128–155 (EKEERKPAKESKRREHDVIIPEGKKEER). The disordered stretch occupies residues 128–167 (EKEERKPAKESKRREHDVIIPEGKKEERTDDGEDGLIVCD).

This is an uncharacterized protein from Archaeoglobus fulgidus (strain ATCC 49558 / DSM 4304 / JCM 9628 / NBRC 100126 / VC-16).